A 151-amino-acid polypeptide reads, in one-letter code: MSSTILVIHGPNLNLLGKREPEVYGHLTLDNINRQLIAQAEQASITLDTFQSNWEGAIVDRIHQAQTEGVKLIIINPAALTHTSVALRDALLGVAIPFIEVHLSNVHAREAFRHHSYLSDKAIGVICGLGAKGYSFALDYAIEKIQPSNPN.

Tyr24 functions as the Proton acceptor in the catalytic mechanism. Residues Asn76, His82, and Asp89 each coordinate substrate. The active-site Proton donor is the His102. Substrate is bound by residues 103 to 104 (LS) and Arg113.

It belongs to the type-II 3-dehydroquinase family. In terms of assembly, homododecamer.

The enzyme catalyses 3-dehydroquinate = 3-dehydroshikimate + H2O. The protein operates within metabolic intermediate biosynthesis; chorismate biosynthesis; chorismate from D-erythrose 4-phosphate and phosphoenolpyruvate: step 3/7. In terms of biological role, catalyzes a trans-dehydration via an enolate intermediate. In Acinetobacter baumannii (strain ATCC 17978 / DSM 105126 / CIP 53.77 / LMG 1025 / NCDC KC755 / 5377), this protein is 3-dehydroquinate dehydratase.